The primary structure comprises 146 residues: Peptidyl-lysine N-acetyltransferase YiaC (146 aa).

The region spanning Met1 to Val143 is the N-acetyltransferase domain.

Belongs to the acetyltransferase family.

The catalysed reaction is L-lysyl-[protein] + acetyl-CoA = N(6)-acetyl-L-lysyl-[protein] + CoA + H(+). Functionally, N-epsilon-lysine acetyltransferase that catalyzes acetylation of a large number of proteins. Overexpression inhibits motility. The chain is Peptidyl-lysine N-acetyltransferase YiaC (yiaC) from Escherichia coli (strain K12).